Consider the following 67-residue polypeptide: Small ribosomal subunit protein eS31 (67 aa).

Zn(2+) is bound by residues cysteine 31, cysteine 34, cysteine 49, and cysteine 52. A C4-type zinc finger spans residues 31-52; that stretch reads CPKCGAGVFMAEHLNRFACGKC.

The protein belongs to the eukaryotic ribosomal protein eS31 family. Part of the 30S ribosomal subunit. It depends on Zn(2+) as a cofactor.

In Methanococcus maripaludis (strain DSM 14266 / JCM 13030 / NBRC 101832 / S2 / LL), this protein is Small ribosomal subunit protein eS31.